Consider the following 550-residue polypeptide: Glucose-6-phosphate isomerase 1 (550 aa).

Glu355 functions as the Proton donor in the catalytic mechanism. Residues His386 and Lys512 contribute to the active site.

Belongs to the GPI family.

Its subcellular location is the cytoplasm. The enzyme catalyses alpha-D-glucose 6-phosphate = beta-D-fructose 6-phosphate. Its pathway is carbohydrate biosynthesis; gluconeogenesis. The protein operates within carbohydrate degradation; glycolysis; D-glyceraldehyde 3-phosphate and glycerone phosphate from D-glucose: step 2/4. Catalyzes the reversible isomerization of glucose-6-phosphate to fructose-6-phosphate. In Rhodococcus jostii (strain RHA1), this protein is Glucose-6-phosphate isomerase 1.